Consider the following 471-residue polypeptide: MEILCEDNISLSSIPNSLMQLGDDSRLYPNDFNSRDANTSEASNWTIDAENRTNLSCEGYLPPTCLSILHLQEKNWSALLTTVVIILTIAGNILVIMAVSLEKKLQNATNYFLMSLAIADMLLGFLVMPVSMLTILYGYRWPLPSKLCAVWIYLDVLFSTASIMHLCAISLDRYVAIQNPIHHSRFNSRTKAFLKIIAVWTISVGISMPIPVFGLQDDSKVFKEGSCLLADDNFVLIGSFVAFFIPLTIMVITYFLTIKSLQKEATLCVSDLSTRAKLSSFSFLPQSSLSSEKLFQRSIHREPGSYAGRRTMQSISNEQKACKVLGIVFFLFVVMWCPFFITNIMAVICKESCNENVIGALLNVFVWIGYLSSAVNPLVYTLFNKTYRSAFSRYIQCQYKENRKPLQLILVNTIPTLAYKSSQLQVGQKKNSQEDAEPTANDCSMVTLGNQHSEEMCTDNIETVNEKVSCV.

Residues 1–80 (MEILCEDNIS…LQEKNWSALL (80 aa)) lie on the Extracellular side of the membrane. N8, N38, N44, N51, and N54 each carry an N-linked (GlcNAc...) asparagine glycan. The helical transmembrane segment at 81 to 97 (TTVVIILTIAGNILVIM) threads the bilayer. The Cytoplasmic segment spans residues 98–111 (AVSLEKKLQNATNY). The helical transmembrane segment at 112 to 137 (FLMSLAIADMLLGFLVMPVSMLTILY) threads the bilayer. Topologically, residues 138-146 (GYRWPLPSK) are extracellular. The chain crosses the membrane as a helical span at residues 147-171 (LCAVWIYLDVLFSTASIMHLCAISL). A disulfide bridge connects residues C148 and C227. Residue D155 participates in serotonin binding. The DRY motif; important for ligand-induced conformation changes signature appears at 172–174 (DRY). Topologically, residues 172–191 (DRYVAIQNPIHHSRFNSRTK) are cytoplasmic. The chain crosses the membrane as a helical span at residues 192–215 (AFLKIIAVWTISVGISMPIPVFGL). Over 216–232 (QDDSKVFKEGSCLLADD) the chain is Extracellular. A helical transmembrane segment spans residues 233–258 (NFVLIGSFVAFFIPLTIMVITYFLTI). The Cytoplasmic segment spans residues 259-322 (KSLQKEATLC…QSISNEQKAC (64 aa)). At S280 the chain carries Phosphoserine. The chain crosses the membrane as a helical span at residues 323-348 (KVLGIVFFLFVVMWCPFFITNIMAVI). N343 contacts serotonin. C349 and C353 are joined by a disulfide. At 349–356 (CKESCNEN) the chain is on the extracellular side. The helical transmembrane segment at 357-382 (VIGALLNVFVWIGYLSSAVNPLVYTL) threads the bilayer. The short motif at 376–380 (NPLVY) is the NPxxY motif; important for ligand-induced conformation changes and signaling element. Over 383–471 (FNKTYRSAFS…ETVNEKVSCV (89 aa)) the chain is Cytoplasmic. Positions 469 to 471 (SCV) match the PDZ-binding motif.

Belongs to the G-protein coupled receptor 1 family. Interacts (via C-terminus) with MPDZ and PATJ. May interact (via C-terminus) with MPP3, PRDX6, DLG4, DLG1, CASK, APBA1 and MAGI2. Interacts with GRM2 and DRD2; this may affect signaling. As to expression, detected in neurons in brain cortex. Detected in adult intestine, especially in mucosal epithelium, longitudinal and circular layers of muscularis externa and myenteric plexuses. Highly expressed in Paneth cells, and detected at lower levels in enterocytes (at protein level). Detected in neurons in the brain cortex.

The protein resides in the cell membrane. Its subcellular location is the cell projection. The protein localises to the dendrite. It localises to the axon. It is found in the cytoplasmic vesicle. The protein resides in the membrane. Its subcellular location is the caveola. The protein localises to the presynapse. G-protein coupled receptor activity is regulated by lipids: oleamide increases HTR2A-mediated activity. In terms of biological role, G-protein coupled receptor for 5-hydroxytryptamine (serotonin). Also functions as a receptor for various drugs and psychoactive substances, including mescaline, psilocybin, 1-(2,5-dimethoxy-4-iodophenyl)-2-aminopropane (DOI) and lysergic acid diethylamide (LSD). Ligand binding causes a conformation change that triggers signaling via guanine nucleotide-binding proteins (G proteins) and modulates the activity of downstream effectors. HTR2A is coupled to G(q)/G(11) G alpha proteins and activates phospholipase C-beta, releasing diacylglycerol (DAG) and inositol 1,4,5-trisphosphate (IP3) second messengers that modulate the activity of phosphatidylinositol 3-kinase and promote the release of Ca(2+) ions from intracellular stores, respectively. Beta-arrestin family members inhibit signaling via G proteins and mediate activation of alternative signaling pathways. Affects neural activity, perception, cognition and mood. Plays a role in the regulation of behavior, including responses to anxiogenic situations and psychoactive substances. Plays a role in intestinal smooth muscle contraction, and may play a role in arterial vasoconstriction. The protein is 5-hydroxytryptamine receptor 2A (Htr2a) of Mus musculus (Mouse).